The chain runs to 297 residues: Probable endonuclease 4 (297 aa).

The Zn(2+) site is built by H69, H110, E145, D179, H182, H214, D227, H229, and E259.

This sequence belongs to the AP endonuclease 2 family. It depends on Zn(2+) as a cofactor.

The enzyme catalyses Endonucleolytic cleavage to 5'-phosphooligonucleotide end-products.. Endonuclease IV plays a role in DNA repair. It cleaves phosphodiester bonds at apurinic or apyrimidinic (AP) sites, generating a 3'-hydroxyl group and a 5'-terminal sugar phosphate. This chain is Probable endonuclease 4, found in Listeria monocytogenes serovar 1/2a (strain ATCC BAA-679 / EGD-e).